A 356-amino-acid polypeptide reads, in one-letter code: tRNA N6-adenosine threonylcarbamoyltransferase (356 aa).

Residues histidine 110 and histidine 114 each coordinate Fe cation. Substrate-binding positions include 133–137 (LVSGG), aspartate 166, glycine 179, and asparagine 276. Aspartate 304 contributes to the Fe cation binding site.

This sequence belongs to the KAE1 / TsaD family. Fe(2+) is required as a cofactor.

The protein localises to the cytoplasm. It catalyses the reaction L-threonylcarbamoyladenylate + adenosine(37) in tRNA = N(6)-L-threonylcarbamoyladenosine(37) in tRNA + AMP + H(+). In terms of biological role, required for the formation of a threonylcarbamoyl group on adenosine at position 37 (t(6)A37) in tRNAs that read codons beginning with adenine. Is involved in the transfer of the threonylcarbamoyl moiety of threonylcarbamoyl-AMP (TC-AMP) to the N6 group of A37, together with TsaE and TsaB. TsaD likely plays a direct catalytic role in this reaction. This chain is tRNA N6-adenosine threonylcarbamoyltransferase, found in Teredinibacter turnerae (strain ATCC 39867 / T7901).